Here is a 409-residue protein sequence, read N- to C-terminus: Torsin-4A (409 aa).

Over residues 1-16 (MGEQDPSDRLRGDQLK) the composition is skewed to basic and acidic residues. Disordered stretches follow at residues 1–28 (MGEQ…SFSQ) and 75–99 (DNLH…KGRV). Residues 17 to 28 (EPNQNGKGSFSQ) show a composition bias toward polar residues. The segment covering 88–98 (PRKRKKKRKGR) has biased composition (basic residues). The chain crosses the membrane as a helical span at residues 120 to 136 (CLYLLCIIVFLQVYNAI). 192 to 199 (GPTGVGKS) contacts ATP.

The protein belongs to the ClpA/ClpB family. Torsin subfamily.

The protein localises to the membrane. The chain is Torsin-4A (tor4a) from Danio rerio (Zebrafish).